Reading from the N-terminus, the 202-residue chain is uncharacterized protein (202 aa).

The N-terminal stretch at 1 to 19 (MRRKNGFSVASVFILCSIA) is a signal peptide. Residues 177 to 199 (FLASSSSSFSSFLPSIAIILFFV) traverse the membrane as a helical segment.

It is found in the membrane. This is an uncharacterized protein from Caenorhabditis elegans.